The chain runs to 492 residues: E1B 55 kDa protein (492 aa).

Residues 22–112 (ENMEGSQDED…ERNPSGNNSR (91 aa)) form a disordered region. Residues 34–44 (RLLASAASGSS) show a composition bias toward low complexity. S486 and S487 each carry phosphoserine. Phosphothreonine is present on T491.

It belongs to the adenoviridae E1B 55 kDa protein family. In terms of assembly, interacts with host PML-4 and PML-5; this interaction promotes efficient subnuclear targeting of E1B-55K to PML nuclear bodies. Interacts with E4-ORF3 protein. Interacts with E4-ORF6 protein.

It localises to the host nucleus. The protein localises to the host cytoplasm. In terms of biological role, plays a major role to prevent cellular inhibition of viral genome replication. Assembles an SCF-like E3 ubiquitin ligase complex based on the cellular proteins ELOB, ELOC, CUL5 and RBX1, in cooperation with viral E4orf6. This viral RING-type ligase ubiquitinates cellular substrates and targets them to proteasomal degradation: TP53/p53, LIG4, MRE11-RAD50-NBS1 (MRN) complex, ITGA3, DAXX and BLM. E1B-55K probably acts as the substrate-specific adapter of the SCF-like E3 ubiquitin ligase complex. Degradation of host TP53/p53 activity is essential for preventing E1A-induced TP53 accumulation that would otherwise lead to cell apoptosis and growth arrest. E1B-55K also inactivates TP53 transcription-factor activity by binding its transactivation domain. E1B-55K also functions as a SUMO1 E3 ligase for TP53 which causes the latter to be sequestered in promyelocytic leukemia (PML) nuclear bodies thereby contributing to maximal inhibition of TP53 function. This chain is E1B 55 kDa protein, found in Human adenovirus B serotype 7 (HAdV-7).